The following is a 179-amino-acid chain: MINHNEWLIVGLITSPQGINGKIKIKSLSDFEERFTKPGKRWIQKGNETPIEFELTHGFKKPGKESFIITFKGINNRTQAENLKGQKILVKVDAIPKLSHGEYHLTELINLNVKISENNQLHIIGKVINLSNEKNNLLVIQLLKNNKEVLIPFVKEIVPIVDIKKNFILLTPPSGLLEL.

The PRC barrel domain occupies 100–176; the sequence is HGEYHLTELI…FILLTPPSGL (77 aa).

This sequence belongs to the RimM family. As to quaternary structure, binds ribosomal protein uS19.

The protein localises to the cytoplasm. In terms of biological role, an accessory protein needed during the final step in the assembly of 30S ribosomal subunit, possibly for assembly of the head region. Essential for efficient processing of 16S rRNA. May be needed both before and after RbfA during the maturation of 16S rRNA. It has affinity for free ribosomal 30S subunits but not for 70S ribosomes. This chain is Ribosome maturation factor RimM, found in Prochlorococcus marinus subsp. pastoris (strain CCMP1986 / NIES-2087 / MED4).